A 230-amino-acid polypeptide reads, in one-letter code: tRNA pseudouridine synthase B (230 aa).

Asp-45 serves as the catalytic Nucleophile.

The protein belongs to the pseudouridine synthase TruB family. Type 1 subfamily.

The catalysed reaction is uridine(55) in tRNA = pseudouridine(55) in tRNA. In terms of biological role, responsible for synthesis of pseudouridine from uracil-55 in the psi GC loop of transfer RNAs. This is tRNA pseudouridine synthase B from Endomicrobium trichonymphae.